Consider the following 212-residue polypeptide: MESALTVLSGWGWPVEVVTGPVADHLTEMRPPAPTGTTCTTTSTPTPLCVPDLSVESIKGLAPDGENANYVGFDTMFMVSSIDELGRRQLTDTIRKDLRVTLAKFTIACTKTSSFSSASSTRRRKRHCPSSERVMRSNKSLQMFVLCRRAHAKQIRDQLQSVIQARKPRKYYTRSSDGRTHPVVPVYIYEFSAVDKVYLHRDNVIEADAQAK.

This sequence belongs to the alphaherpesvirinae HHV-1 UL3 family. Phosphorylated.

It localises to the host nucleus. The polypeptide is Nuclear phosphoprotein UL3 homolog (Equus caballus (Horse)).